The following is a 171-amino-acid chain: Peptide deformylase 1 (171 aa).

Cysteine 99 and histidine 141 together coordinate Fe cation. Glutamate 142 is a catalytic residue. Histidine 145 provides a ligand contact to Fe cation.

It belongs to the polypeptide deformylase family. The cofactor is Fe(2+).

The enzyme catalyses N-terminal N-formyl-L-methionyl-[peptide] + H2O = N-terminal L-methionyl-[peptide] + formate. Removes the formyl group from the N-terminal Met of newly synthesized proteins. Requires at least a dipeptide for an efficient rate of reaction. N-terminal L-methionine is a prerequisite for activity but the enzyme has broad specificity at other positions. The polypeptide is Peptide deformylase 1 (Xanthomonas campestris pv. campestris (strain ATCC 33913 / DSM 3586 / NCPPB 528 / LMG 568 / P 25)).